The following is a 126-amino-acid chain: Protein FMP49, mitochondrial (126 aa).

It localises to the mitochondrion. The sequence is that of Protein FMP49, mitochondrial from Saccharomyces cerevisiae (strain ATCC 204508 / S288c) (Baker's yeast).